A 390-amino-acid chain; its full sequence is Probable splicing factor YJU2B (390 aa).

The disordered stretch occupies residues 354 to 390 (DACKASSSSEEENSIDSCATGKSLVADYSDSDSGSEV).

It belongs to the CWC16 family.

Its subcellular location is the nucleus. Its function is as follows. May be involved in mRNA splicing. The sequence is that of Probable splicing factor YJU2B (yju2b) from Danio rerio (Zebrafish).